A 630-amino-acid polypeptide reads, in one-letter code: uncharacterized protein (630 aa).

4 helical membrane passes run 254–274 (MFYA…ELRV), 504–524 (IALL…LTSI), 564–584 (MIFA…SMVF), and 601–621 (IIVI…AVLF).

Its subcellular location is the cell membrane. This is an uncharacterized protein from Mycoplasma genitalium (strain ATCC 33530 / DSM 19775 / NCTC 10195 / G37) (Mycoplasmoides genitalium).